A 233-amino-acid chain; its full sequence is MTIGIIGAMEEEVELLKNSMPSVEEIVIGGAKFYVGEIAGKEVVLLESGIGKVNAALGTTLMADRFKPEVIINTGSAGGMAEGLAVGDVIISDRLAYGDVDVTEFGYTYGQVPRMPAFYQGDAVLLKKAETIYREYFAASENKAVYGLVVTNDSFIMRPDQHETIRTFFPDVKAVEMEAAAIAQVAYQFDIPFLIIRAISDLANQEATISFDEFIHLAARQSATCIIELLKTI.

Glu12 acts as the Proton acceptor in catalysis. Residues Gly78, Ile156, and 177 to 178 contribute to the substrate site; that span reads ME. The active-site Proton donor is the Asp201.

Belongs to the PNP/UDP phosphorylase family. MtnN subfamily.

The catalysed reaction is S-adenosyl-L-homocysteine + H2O = S-(5-deoxy-D-ribos-5-yl)-L-homocysteine + adenine. It catalyses the reaction S-methyl-5'-thioadenosine + H2O = 5-(methylsulfanyl)-D-ribose + adenine. It carries out the reaction 5'-deoxyadenosine + H2O = 5-deoxy-D-ribose + adenine. It functions in the pathway amino-acid biosynthesis; L-methionine biosynthesis via salvage pathway; S-methyl-5-thio-alpha-D-ribose 1-phosphate from S-methyl-5'-thioadenosine (hydrolase route): step 1/2. Functionally, catalyzes the irreversible cleavage of the glycosidic bond in both 5'-methylthioadenosine (MTA) and S-adenosylhomocysteine (SAH/AdoHcy) to adenine and the corresponding thioribose, 5'-methylthioribose and S-ribosylhomocysteine, respectively. Also cleaves 5'-deoxyadenosine, a toxic by-product of radical S-adenosylmethionine (SAM) enzymes, into 5-deoxyribose and adenine. The sequence is that of 5'-methylthioadenosine/S-adenosylhomocysteine nucleosidase from Listeria monocytogenes serotype 4b (strain F2365).